The following is a 184-amino-acid chain: Cell number regulator 5 (184 aa).

A helical membrane pass occupies residues 91 to 111 (MLWGLLTSLCCVFTGGLVLAV). Residues 162–184 (RTGSGSSPAPNVTPPPVQTMDEL) form a disordered region.

The protein belongs to the cornifelin family. Expressed in roots, leaves, stalks, immature ears, endosperm and pollen.

Its subcellular location is the membrane. In Zea mays (Maize), this protein is Cell number regulator 5 (CNR5).